The primary structure comprises 285 residues: Probable ribosomal RNA small subunit methyltransferase A (285 aa).

Positions 29, 31, 58, 79, 107, and 122 each coordinate S-adenosyl-L-methionine.

The protein belongs to the class I-like SAM-binding methyltransferase superfamily. rRNA adenine N(6)-methyltransferase family. RsmA subfamily.

It is found in the cytoplasm. In terms of biological role, specifically dimethylates two adjacent adenosines in the loop of a conserved hairpin near the 3'-end of 16S rRNA in the 30S particle. May play a critical role in biogenesis of 30S subunits. The polypeptide is Probable ribosomal RNA small subunit methyltransferase A (Haloarcula marismortui (strain ATCC 43049 / DSM 3752 / JCM 8966 / VKM B-1809) (Halobacterium marismortui)).